Here is a 1203-residue protein sequence, read N- to C-terminus: Delphilin (1203 aa).

Residues 1-79 (MPATNQGWPE…VPPSLGVLPG (79 aa)) enclose the PDZ 1 domain. Residue Ala-3 is the site of S-palmitoyl cysteine attachment. The interval 215–270 (GAQRLRRSRSEERPERLLVSTRASAAPRRPDEPPPRKATSLLGGRTGPGGPRRTVR) is disordered. Low complexity predominate over residues 231-241 (LLVSTRASAAP). In terms of domain architecture, PDZ 2 spans 268–345 (TVRVYKGNKS…MPTLVVEEGP (78 aa)). Ser-303 carries the phosphoserine modification. Disordered stretches follow at residues 466 to 541 (ESSL…TPNP), 563 to 586 (IGTM…GPRT), 611 to 656 (LASP…PPSR), and 710 to 821 (SFVT…SHMS). Polar residues predominate over residues 500–509 (RSQGLETSLS). Phosphoserine occurs at positions 572, 613, 644, and 647. Residues 611–625 (LASPSSSESHPYASL) are compositionally biased toward low complexity. The segment covering 715-740 (ERSSASECVSSSEEGSSLTYSSISDH) has biased composition (low complexity). A compositionally biased stretch (pro residues) spans 741–756 (IPPPPLSPPPPPPLPF). A compositionally biased stretch (polar residues) spans 774-784 (QSLTKPLTQIN). Positions 786 to 803 (PVPPPPPPPLPPPVPCAP) are enriched in pro residues. Residues 812 to 1203 (HRRSETSHMS…SSGMVSPLAW (392 aa)) form the FH2 domain.

As to quaternary structure, interacts with C-terminus of the glutamate receptor GRID2 via PDZ domain. Isoform 2 also interacts with Profilin-2/PFN2 and with the monocarboxylate transporter SLC16A7 via PDZ domain. The interaction of isoform 2 with GRID2 is dependent on GRID2 phosphorylation by PKA. Post-translationally, isoform 2 is palmitoylated. Palmitoylation of isoform 2 is necessary for the enhanced cell surface expression of GRID2, and is also responsible for the accumulation of isoform 2 within dendritic spines. Isoform 1 and isoform 2 are differentially localized, probably modulating GRID2 signaling in neurons. In terms of tissue distribution, isoform 1 is expressed in the cerebellum, but not in the cerebral cortex. Isoform 2 is expressed in the cell body of purkinge cells of the cerebellum and weakly expressed in the cerebrum and the brainstem as well as various nuclei of the thalamus. Isoform 2 is highly expressed in the cerebral cortex than in the cerebellum. Isoform 3 is expressed in the cerebellum and cerebrum.

The protein localises to the postsynaptic cell membrane. The protein resides in the cell projection. Its subcellular location is the dendritic spine. It is found in the synapse. It localises to the cell membrane. Functionally, postsynaptic scaffolding protein at the Purkinje cell synapse, where it may serve to link GRID2 with actin cytoskeleton and various signaling molecules. In Mus musculus (Mouse), this protein is Delphilin (Grid2ip).